Here is an 85-residue protein sequence, read N- to C-terminus: U4-theraphotoxin-Hhn1l (85 aa).

Residues 1-22 form the signal peptide; that stretch reads MKVTLIAFLTCAAVLVLHTTAA. Residues 23 to 48 constitute a propeptide that is removed on maturation; it reads EELEAESQLMGVGMPDTELAAVDEER. Intrachain disulfides connect C52/C66, C56/C77, and C71/C82.

It belongs to the neurotoxin 12 (Hwtx-2) family. 02 (Hwtx-2) subfamily. In terms of tissue distribution, expressed by the venom gland.

The protein resides in the secreted. In terms of biological role, postsynaptic neurotoxin. The sequence is that of U4-theraphotoxin-Hhn1l from Cyriopagopus hainanus (Chinese bird spider).